A 145-amino-acid chain; its full sequence is Sec-independent protein translocase protein TatB (145 aa).

A helical transmembrane segment spans residues 1 to 21 (MLDVGMTELLCFAIIAILVLG).

It belongs to the TatB family. As to quaternary structure, the Tat system comprises two distinct complexes: a TatABC complex, containing multiple copies of TatA, TatB and TatC subunits, and a separate TatA complex, containing only TatA subunits. Substrates initially bind to the TatABC complex, which probably triggers association of the separate TatA complex to form the active translocon.

The protein resides in the cell inner membrane. Its function is as follows. Part of the twin-arginine translocation (Tat) system that transports large folded proteins containing a characteristic twin-arginine motif in their signal peptide across membranes. Together with TatC, TatB is part of a receptor directly interacting with Tat signal peptides. TatB may form an oligomeric binding site that transiently accommodates folded Tat precursor proteins before their translocation. The chain is Sec-independent protein translocase protein TatB from Acinetobacter baumannii (strain ATCC 17978 / DSM 105126 / CIP 53.77 / LMG 1025 / NCDC KC755 / 5377).